A 560-amino-acid chain; its full sequence is Formate--tetrahydrofolate ligase (560 aa).

Residue 69–76 coordinates ATP; sequence TPAGEGKS.

The protein belongs to the formate--tetrahydrofolate ligase family.

The catalysed reaction is (6S)-5,6,7,8-tetrahydrofolate + formate + ATP = (6R)-10-formyltetrahydrofolate + ADP + phosphate. The protein operates within one-carbon metabolism; tetrahydrofolate interconversion. This Listeria innocua serovar 6a (strain ATCC BAA-680 / CLIP 11262) protein is Formate--tetrahydrofolate ligase.